Here is a 467-residue protein sequence, read N- to C-terminus: Ribulose bisphosphate carboxylase large chain (467 aa).

Residue K5 is modified to N6,N6,N6-trimethyllysine. N114 and T164 together coordinate substrate. The Proton acceptor role is filled by K166. A substrate-binding site is contributed by K168. Mg(2+) contacts are provided by K192, D194, and E195. N6-carboxylysine is present on K192. Catalysis depends on H285, which acts as the Proton acceptor. Residues R286, H318, and S370 each contribute to the substrate site.

The protein belongs to the RuBisCO large chain family. Type I subfamily. Heterohexadecamer of 8 large chains and 8 small chains; disulfide-linked. The disulfide link is formed within the large subunit homodimers. It depends on Mg(2+) as a cofactor. In terms of processing, the disulfide bond which can form in the large chain dimeric partners within the hexadecamer appears to be associated with oxidative stress and protein turnover.

The protein localises to the plastid. It localises to the chloroplast. It carries out the reaction 2 (2R)-3-phosphoglycerate + 2 H(+) = D-ribulose 1,5-bisphosphate + CO2 + H2O. The enzyme catalyses D-ribulose 1,5-bisphosphate + O2 = 2-phosphoglycolate + (2R)-3-phosphoglycerate + 2 H(+). RuBisCO catalyzes two reactions: the carboxylation of D-ribulose 1,5-bisphosphate, the primary event in carbon dioxide fixation, as well as the oxidative fragmentation of the pentose substrate in the photorespiration process. Both reactions occur simultaneously and in competition at the same active site. The protein is Ribulose bisphosphate carboxylase large chain of Hydrophyllum virginianum (Eastern waterleaf).